Reading from the N-terminus, the 311-residue chain is Sulfate adenylyltransferase subunit 2 (311 aa).

The protein belongs to the PAPS reductase family. CysD subfamily. Heterodimer composed of CysD, the smaller subunit, and CysN.

The enzyme catalyses sulfate + ATP + H(+) = adenosine 5'-phosphosulfate + diphosphate. It functions in the pathway sulfur metabolism; hydrogen sulfide biosynthesis; sulfite from sulfate: step 1/3. In terms of biological role, with CysN forms the ATP sulfurylase (ATPS) that catalyzes the adenylation of sulfate producing adenosine 5'-phosphosulfate (APS) and diphosphate, the first enzymatic step in sulfur assimilation pathway. APS synthesis involves the formation of a high-energy phosphoric-sulfuric acid anhydride bond driven by GTP hydrolysis by CysN coupled to ATP hydrolysis by CysD. The polypeptide is Sulfate adenylyltransferase subunit 2 (Methylobacterium sp. (strain 4-46)).